Consider the following 334-residue polypeptide: Ornithine carbamoyltransferase (334 aa).

Residues 57–60 (STRT), Q84, R108, and 135–138 (HPTQ) contribute to the carbamoyl phosphate site. L-ornithine is bound by residues N169, D233, and 237–238 (SM). Residues 275–276 (CL) and R320 each bind carbamoyl phosphate.

This sequence belongs to the aspartate/ornithine carbamoyltransferase superfamily. OTCase family.

The protein resides in the cytoplasm. It carries out the reaction carbamoyl phosphate + L-ornithine = L-citrulline + phosphate + H(+). The protein operates within amino-acid biosynthesis; L-arginine biosynthesis; L-arginine from L-ornithine and carbamoyl phosphate: step 1/3. Functionally, reversibly catalyzes the transfer of the carbamoyl group from carbamoyl phosphate (CP) to the N(epsilon) atom of ornithine (ORN) to produce L-citrulline. This is Ornithine carbamoyltransferase from Vibrio parahaemolyticus serotype O3:K6 (strain RIMD 2210633).